A 505-amino-acid chain; its full sequence is Flagellin (505 aa).

Belongs to the bacterial flagellin family.

It is found in the secreted. The protein resides in the bacterial flagellum. Its function is as follows. Flagellin is the subunit protein which polymerizes to form the filaments of bacterial flagella. The chain is Flagellin (fliC) from Salmonella senftenberg.